Consider the following 372-residue polypeptide: Cytochrome b (372 aa).

Transmembrane regions (helical) follow at residues 25-45 (FGSM…FLAI), 69-90 (WIMQ…YIHI), 105-125 (WLSG…GYVL), and 170-190 (FFAL…IHII). Residues His75 and His89 each contribute to the heme b site. Heme b-binding residues include His174 and His188. Position 193 (His193) interacts with a ubiquinone. 4 helical membrane passes run 218–238 (YKDM…LSFS), 280–300 (LGGA…PFTH), 312–332 (LSQI…WTAS), and 339–358 (FISI…ITIP).

This sequence belongs to the cytochrome b family. In terms of assembly, the cytochrome bc1 complex contains 3 respiratory subunits (MT-CYB, CYC1 and UQCRFS1), 2 core proteins (UQCRC1 and UQCRC2) and probably 6 low-molecular weight proteins. Requires heme b as cofactor.

It localises to the mitochondrion inner membrane. In terms of biological role, component of the ubiquinol-cytochrome c reductase complex (complex III or cytochrome b-c1 complex) that is part of the mitochondrial respiratory chain. The b-c1 complex mediates electron transfer from ubiquinol to cytochrome c. Contributes to the generation of a proton gradient across the mitochondrial membrane that is then used for ATP synthesis. The chain is Cytochrome b (MT-CYB) from Naja annulata annulata (Banded water cobra).